We begin with the raw amino-acid sequence, 89 residues long: Small ribosomal subunit protein uS17 (89 aa).

Belongs to the universal ribosomal protein uS17 family. As to quaternary structure, part of the 30S ribosomal subunit.

Functionally, one of the primary rRNA binding proteins, it binds specifically to the 5'-end of 16S ribosomal RNA. The polypeptide is Small ribosomal subunit protein uS17 (Coxiella burnetii (strain Dugway 5J108-111)).